We begin with the raw amino-acid sequence, 488 residues long: Cytochrome P450 family 716 subfamily AD polypeptide 2 (488 aa).

Residues 5–25 (LLLLSTLLILTLCCHFFYLFI) form a helical membrane-spanning segment. Residue cysteine 433 coordinates heme.

This sequence belongs to the cytochrome P450 family. The cofactor is heme. As to expression, expressed in maturing fruits and in juice vesicles.

The protein localises to the membrane. It catalyses the reaction (1R,2R,3S,8R,10R,11R,15S,16S)-3-(acetyloxy)-15-[(4R)-4-[(2S)-3,3-dimethyloxiran-2-yl]-1,4-dihydroxybutan-2-yl]-2,7,7,11,16-pentamethyl-5-oxo-6-oxatetracyclo[9.7.0.0(2,8).0(12,16)]octadec-12-en-10-yl acetate + reduced [NADPH--hemoprotein reductase] + O2 = (1R,2R,3S,8R,10R,11R,15S,16S)-3-(acetyloxy)-15-(1-hydroxy-4-oxobutan-2-yl)-2,7,7,11,16-pentamethyl-5-oxo-6-oxatetracyclo[9.7.0.0(2,8).0(12,16)]octadec-12-en-10-yl acetate + 2-methylpropanoate + oxidized [NADPH--hemoprotein reductase] + H2O + 2 H(+). It participates in secondary metabolite biosynthesis; terpenoid biosynthesis. Functionally, monooxygenase involved in the biosynthesis of limonoids triterpene natural products such as limonin, a compound with insecticidal activity responsible for the bitter taste in citrus. Catalyzes the formation of (1R,2R,3S,8R,10R,11R,15S,16S)-3-(acetyloxy)-15-(1-hydroxy-4-oxobutan-2-yl)-2,7,7,11,16-pentamethyl-5-oxo-6-oxatetracyclo[9.7.0.0(2,8).0(12,16)]octadec-12-en-10-yl acetate. The polypeptide is Cytochrome P450 family 716 subfamily AD polypeptide 2 (Citrus sinensis (Sweet orange)).